The chain runs to 761 residues: Probable ATP-dependent RNA helicase DDX20 (761 aa).

Residues 26-54 carry the Q motif motif; it reads VEFSSLLLSKPVLEGLSASGFQRPSPIQL. Residues arginine 48, glutamine 53, 70-77, and 73-78 each bind ATP; these read AKSGTGKT and GTGKTC. The region spanning 57 to 231 is the Helicase ATP-binding domain; sequence IPLGRCGLDL…SRYMREPTFV (175 aa). Positions 175-178 match the DEAD box motif; it reads DEAD. One can recognise a Helicase C-terminal domain in the interval 266-415; the sequence is SLLELFSKIP…PIPPGIMEEA (150 aa). Disordered stretches follow at residues 428–525 and 570–720; these read PKIP…KSHT and HDAH…EAGQ. Positions 443 to 456 are enriched in basic and acidic residues; that stretch reads KSEQMKSKPSRESH. Positions 498–512 are enriched in polar residues; sequence QHDSTITQKQQNNTL. 2 stretches are compositionally biased toward low complexity: residues 600–613 and 623–635; these read SELSSEQKTSSESS and ESSSSVPSKSTLE. Residues 655–679 are compositionally biased toward polar residues; it reads TLPSTRVPQQATRSKQKPCQPQSQD. Residues 683-707 are compositionally biased toward basic residues; the sequence is HHNLPHKHRTASKSSRRPTGPKRRT.

Belongs to the DEAD box helicase family. DDX20 subfamily. In terms of assembly, part of the core SMN complex.

Its subcellular location is the cytoplasm. It localises to the nucleus. It catalyses the reaction ATP + H2O = ADP + phosphate + H(+). It carries out the reaction a ribonucleoside 5'-triphosphate + H2O = a ribonucleoside 5'-diphosphate + phosphate + H(+). Its function is as follows. The SMN complex catalyzes the assembly of small nuclear ribonucleoproteins (snRNPs), the building blocks of the spliceosome, and thereby plays an important role in the splicing of cellular pre-mRNAs. Most spliceosomal snRNPs contain a common set of Sm proteins SNRPB, SNRPD1, SNRPD2, SNRPD3, SNRPE, SNRPF and SNRPG that assemble in a heptameric protein ring on the Sm site of the small nuclear RNA to form the core snRNP (Sm core). In the cytosol, the Sm proteins SNRPD1, SNRPD2, SNRPE, SNRPF and SNRPG are trapped in an inactive 6S pICln-Sm complex by the chaperone CLNS1A that controls the assembly of the core snRNP. To assemble core snRNPs, the SMN complex accepts the trapped 5Sm proteins from CLNS1A forming an intermediate. Binding of snRNA inside 5Sm triggers eviction of the SMN complex, thereby allowing binding of SNRPD3 and SNRPB to complete assembly of the core snRNP. May also play a role in the metabolism of small nucleolar ribonucleoprotein (snoRNPs). This is Probable ATP-dependent RNA helicase DDX20 (ddx20) from Danio rerio (Zebrafish).